The following is a 580-amino-acid chain: FAD-dependent monooxygenase DEP4 (580 aa).

47–50 is an FAD binding site; the sequence is VWSK. 58-60 serves as a coordination point for NADP(+); that stretch reads FAQ. Val112 contacts FAD. NADP(+) is bound by residues 186 to 205, 222 to 223, and 354 to 355; these read VGRSKSSYDAVYHLLCAGKK, AP, and DI. Met473 lines the FAD pocket.

Belongs to the FAD-binding monooxygenase family. It depends on FAD as a cofactor.

The protein operates within polyketide biosynthesis. Functionally, part of the gene cluster that mediates the biosynthesis of depudecin, a highly oxidized eleven-carbon linear polyketide that acts as a histone deacetylase (HDAC) inhibitor and makes a small contribution to pathogenesis. The reducing polyketide synthase DEP5 is the central enzyme in depudecin biosynthesis by yielding the backbone polyketide chain. The monooxygenases DEP2 and DEP4, as well as the uncharacterized protein DEP1, then act as tailoring enzymes to modify the intermediate polyketide chain into depudecin. In Fusarium langsethiae, this protein is FAD-dependent monooxygenase DEP4.